The following is a 414-amino-acid chain: Secernin-1 (414 aa).

Ala2 is subject to N-acetylalanine. The active site involves Cys9.

It belongs to the peptidase C69 family. Secernin subfamily.

It localises to the cytoplasm. Regulates exocytosis in mast cells. Increases both the extent of secretion and the sensitivity of mast cells to stimulation with calcium. In Bos taurus (Bovine), this protein is Secernin-1 (SCRN1).